A 252-amino-acid polypeptide reads, in one-letter code: MILHAQAKHGKPGLPWLVFLHGFSGDCHEWQEVGEAFADYSRLYVDLPGHGGSATISVDGFDDVTGLLCKTLVSYNILNFWLVGYSLGGRVAMMAACQELAGLCGVVVEGGHPGLQNAEQRAERQRSDRQWAQRFRTEPLTAVFADWYQQPVFASLNDDQRRELVALRSNNNGATLAAMLEATSLAVQPDLRANLSARTFAFYYLCGERDSKFRALAAELAADCHVIPRAGHNAHRENPAGVIASLAQILRF.

This sequence belongs to the AB hydrolase superfamily. MenH family. As to quaternary structure, monomer.

The enzyme catalyses 5-enolpyruvoyl-6-hydroxy-2-succinyl-cyclohex-3-ene-1-carboxylate = (1R,6R)-6-hydroxy-2-succinyl-cyclohexa-2,4-diene-1-carboxylate + pyruvate. Its pathway is quinol/quinone metabolism; 1,4-dihydroxy-2-naphthoate biosynthesis; 1,4-dihydroxy-2-naphthoate from chorismate: step 3/7. It participates in quinol/quinone metabolism; menaquinone biosynthesis. Its function is as follows. Catalyzes a proton abstraction reaction that results in 2,5-elimination of pyruvate from 2-succinyl-5-enolpyruvyl-6-hydroxy-3-cyclohexene-1-carboxylate (SEPHCHC) and the formation of 2-succinyl-6-hydroxy-2,4-cyclohexadiene-1-carboxylate (SHCHC). In Escherichia coli O81 (strain ED1a), this protein is 2-succinyl-6-hydroxy-2,4-cyclohexadiene-1-carboxylate synthase.